The following is a 68-amino-acid chain: Small ribosomal subunit protein bS21 (68 aa).

It belongs to the bacterial ribosomal protein bS21 family.

In Endomicrobium trichonymphae, this protein is Small ribosomal subunit protein bS21.